The primary structure comprises 106 residues: uncharacterized protein (106 aa).

A disordered region spans residues 28-68 (SSANEPKKLPNKKLVSTKSHTQVNREKSKNKDTYEDYSDSN). Basic and acidic residues predominate over residues 50-61 (VNREKSKNKDTY).

This is an uncharacterized protein from Acanthamoeba polyphaga (Amoeba).